We begin with the raw amino-acid sequence, 600 residues long: tRNA uridine 5-carboxymethylaminomethyl modification enzyme MnmG (600 aa).

10-15 (GGGHAG) serves as a coordination point for FAD. Residues 216–239 (ADPQPRGFTGTPGPRAAESPTWQT) form a disordered region. Position 267–281 (267–281 (GPRYCPSIEDKVVKF)) interacts with NAD(+).

It belongs to the MnmG family. In terms of assembly, homodimer. Heterotetramer of two MnmE and two MnmG subunits. It depends on FAD as a cofactor.

It is found in the cytoplasm. In terms of biological role, NAD-binding protein involved in the addition of a carboxymethylaminomethyl (cmnm) group at the wobble position (U34) of certain tRNAs, forming tRNA-cmnm(5)s(2)U34. This chain is tRNA uridine 5-carboxymethylaminomethyl modification enzyme MnmG, found in Deinococcus radiodurans (strain ATCC 13939 / DSM 20539 / JCM 16871 / CCUG 27074 / LMG 4051 / NBRC 15346 / NCIMB 9279 / VKM B-1422 / R1).